The following is a 374-amino-acid chain: Chaperone protein DnaJ (374 aa).

Residues 4–68 enclose the J domain; it reads DYYDILGVSR…ETRARYDRFG (65 aa). The CR-type zinc finger occupies 133-215; the sequence is GGEKQIRITH…CGGNGQAQVT (83 aa). Positions 146, 149, 163, 166, 189, 192, 203, and 206 each coordinate Zn(2+). CXXCXGXG motif repeat units lie at residues 146-153, 163-170, 189-196, and 203-210; these read CTTCNGSG, CGTCGGAG, CPTCNGKG, and CETCGGNG.

The protein belongs to the DnaJ family. In terms of assembly, homodimer. Zn(2+) is required as a cofactor.

Its subcellular location is the cytoplasm. In terms of biological role, participates actively in the response to hyperosmotic and heat shock by preventing the aggregation of stress-denatured proteins and by disaggregating proteins, also in an autonomous, DnaK-independent fashion. Unfolded proteins bind initially to DnaJ; upon interaction with the DnaJ-bound protein, DnaK hydrolyzes its bound ATP, resulting in the formation of a stable complex. GrpE releases ADP from DnaK; ATP binding to DnaK triggers the release of the substrate protein, thus completing the reaction cycle. Several rounds of ATP-dependent interactions between DnaJ, DnaK and GrpE are required for fully efficient folding. Also involved, together with DnaK and GrpE, in the DNA replication of plasmids through activation of initiation proteins. This Cyanothece sp. (strain PCC 7425 / ATCC 29141) protein is Chaperone protein DnaJ.